The chain runs to 245 residues: 8-amino-3,8-dideoxy-manno-octulosonate cytidylyltransferase (245 aa).

It belongs to the KdsB family.

The protein resides in the cytoplasm. The enzyme catalyses 8-amino-3,8-dideoxy-alpha-D-manno-octulosonate + CTP = CMP-8-amino-3,8-dideoxy-alpha-D-manno-oct-2-ulosonate + diphosphate. It functions in the pathway bacterial outer membrane biogenesis; lipopolysaccharide biosynthesis. In terms of biological role, activates KDO8N (a required 8-carbon sugar) for incorporation into bacterial lipopolysaccharide in the Shewanella genus. This Shewanella pealeana (strain ATCC 700345 / ANG-SQ1) protein is 8-amino-3,8-dideoxy-manno-octulosonate cytidylyltransferase.